Consider the following 150-residue polypeptide: UPF0756 membrane protein NT05HA_0561 (150 aa).

The next 4 helical transmembrane spans lie at 1-21, 52-72, 81-101, and 128-148; these read MSLQFNMIALLLVILILLGIF, YGLSIGIVILTIGVLSPLVSG, AFVSWKMFVAIAVGVFVAWLA, and FLGGIPVGPLIAAGILAVLIG.

The protein belongs to the UPF0756 family.

It localises to the cell membrane. The polypeptide is UPF0756 membrane protein NT05HA_0561 (Aggregatibacter aphrophilus (strain NJ8700) (Haemophilus aphrophilus)).